Reading from the N-terminus, the 534-residue chain is MALSQCLEDSPGWRTPRKEQDSNLNELYNERHRLALEELVAGGVQSFMGFLKKERMPNFLSEDEIRRVSRAAVVPKTISINGDDSHLDQSGTLDCSSVTYFPEVSDIEPPVLENGWPAFTTGSYRGVTRAVAYFQPSYGECIYSCKEAARRMIRNAKEVIAIVTDSMTDLDIFHDLREACTRRRVPVYILLDQSSVASFLQMCKNLCVHLDELLQMKVRTITGSTYYMRSGARITGKVHERFMLIDGNKVATGSYRFNWTDGKLNSSNLIELSGQITEKFDEEFRILYAQSLPLPVNTRAPSSARNCSLYDHLVLKAPGTPPSYLARTTKPQAERLTSTPARLQTPEIQRMNKDIEEPDRKSNPVSDSSTLGEDLELPLASADPPRLPSTTVNSQTQTVDVTIVSCCDVSTQTTCHTADVSVQTCKEPQNSKPSSEHQEVDSCPPICPLPQDVNFRECFLKITKERQHHYSSIRSKLDHMVTLLSHKRELVDLTNLPLRPGLNRGRKAQQEARQPNTNIDSGIMGTWPKSRGLQ.

Disordered stretches follow at residues Thr-320–Gly-372 and Gly-501–Gln-534. A compositionally biased stretch (polar residues) spans Thr-329–Arg-342. The span at Arg-350–Ser-362 shows a compositional bias: basic and acidic residues. The span at Glu-511 to Asp-520 shows a compositional bias: polar residues.

This sequence belongs to the FAM83 family.

It is found in the cytoplasm. It localises to the cytoskeleton. Its subcellular location is the spindle. The protein resides in the spindle pole. Its function is as follows. May regulate cell proliferation, growth, migration and epithelial to mesenchymal transition. May also be important for proper chromosome congression and alignment during mitosis. The chain is Protein FAM83D from Danio rerio (Zebrafish).